The sequence spans 319 residues: Probable cytochrome c oxidase subunit 2 (319 aa).

The first 33 residues, 1-33, serve as a signal peptide directing secretion; the sequence is MSPNGSDRSPRRPMRRKLLQALTAGLVLATATG. 2 helical membrane-spanning segments follow: residues 63-83 and 101-121; these read WAAA…SVFF and LPIE…LFYF. Positions 227, 262, 266, and 270 each coordinate Cu cation.

Belongs to the cytochrome c oxidase subunit 2 family. It depends on Cu cation as a cofactor. Heme is required as a cofactor.

The protein localises to the cell membrane. It carries out the reaction 4 Fe(II)-[cytochrome c] + O2 + 8 H(+)(in) = 4 Fe(III)-[cytochrome c] + 2 H2O + 4 H(+)(out). Subunits I and II form the functional core of the enzyme complex. Electrons originating in cytochrome c are transferred via heme a and Cu(A) to the binuclear center formed by heme a3 and Cu(B). The sequence is that of Probable cytochrome c oxidase subunit 2 (ctaC) from Streptomyces coelicolor (strain ATCC BAA-471 / A3(2) / M145).